An 82-amino-acid chain; its full sequence is Small ribosomal subunit protein bS16 (82 aa).

The protein belongs to the bacterial ribosomal protein bS16 family.

The protein is Small ribosomal subunit protein bS16 of Marinomonas sp. (strain MWYL1).